Here is a 201-residue protein sequence, read N- to C-terminus: Flavin prenyltransferase UbiX (201 aa).

Residues 23 to 25 (GAS), S49, 103 to 106 (SIKT), and R138 contribute to the FMN site. Residues Y168 and K184 each coordinate dimethylallyl phosphate.

Belongs to the UbiX/PAD1 family.

The enzyme catalyses dimethylallyl phosphate + FMNH2 = prenylated FMNH2 + phosphate. Flavin prenyltransferase that catalyzes the synthesis of the prenylated FMN cofactor (prenyl-FMN) for 4-hydroxy-3-polyprenylbenzoic acid decarboxylase UbiD. The prenyltransferase is metal-independent and links a dimethylallyl moiety from dimethylallyl monophosphate (DMAP) to the flavin N5 and C6 atoms of FMN. In Saccharolobus solfataricus (strain ATCC 35092 / DSM 1617 / JCM 11322 / P2) (Sulfolobus solfataricus), this protein is Flavin prenyltransferase UbiX.